A 193-amino-acid chain; its full sequence is Frataxin, mitochondrial (193 aa).

The N-terminal 72 residues, 1-72 (MIFNFLNKAS…KQQQQLSKSF (72 aa)), are a transit peptide targeting the mitochondrion.

Belongs to the frataxin family. In terms of assembly, monomer. Oligomer.

It localises to the mitochondrion. The catalysed reaction is 4 Fe(2+) + O2 + 4 H(+) = 4 Fe(3+) + 2 H2O. Its function is as follows. Promotes the biosynthesis of heme as well as the assembly and repair of iron-sulfur clusters by delivering Fe(2+) to proteins involved in these pathways. May play a role in the protection against iron-catalyzed oxidative stress through its ability to catalyze the oxidation of Fe(2+) to Fe(3+). May be able to store large amounts of the metal in the form of a ferrihydrite mineral by oligomerization. In Dictyostelium discoideum (Social amoeba), this protein is Frataxin, mitochondrial (fxn).